A 608-amino-acid chain; its full sequence is Kelch-like protein 10 (608 aa).

The region spanning 39 to 106 (CDVVIKVNGF…AYTRTVPITP (68 aa)) is the BTB domain. Kelch repeat units lie at residues 292 to 339 (ILFA…YLKG), 340 to 386 (YVYI…VLSN), 388 to 433 (IYAM…TLYG), 434 to 480 (KVYI…AYGE), 481 to 527 (HVYA…VVDD), and 529 to 574 (LFVV…VVPG). A Phosphoserine modification is found at Ser501.

Self-associates. Interacts with CUL3; indicative for the participation in an E3 ubiquitin ligase complex.

It is found in the cytoplasm. It functions in the pathway protein modification; protein ubiquitination. Functionally, may be a substrate-specific adapter of a CUL3-based E3 ubiquitin-protein ligase complex which mediates the ubiquitination and subsequent proteasomal degradation of target proteins during spermatogenesis. The polypeptide is Kelch-like protein 10 (Klhl10) (Rattus norvegicus (Rat)).